The sequence spans 425 residues: Gamma-glutamyl phosphate reductase (425 aa).

It belongs to the gamma-glutamyl phosphate reductase family.

Its subcellular location is the cytoplasm. The enzyme catalyses L-glutamate 5-semialdehyde + phosphate + NADP(+) = L-glutamyl 5-phosphate + NADPH + H(+). The protein operates within amino-acid biosynthesis; L-proline biosynthesis; L-glutamate 5-semialdehyde from L-glutamate: step 2/2. Catalyzes the NADPH-dependent reduction of L-glutamate 5-phosphate into L-glutamate 5-semialdehyde and phosphate. The product spontaneously undergoes cyclization to form 1-pyrroline-5-carboxylate. This chain is Gamma-glutamyl phosphate reductase, found in Aromatoleum aromaticum (strain DSM 19018 / LMG 30748 / EbN1) (Azoarcus sp. (strain EbN1)).